The chain runs to 205 residues: GTP cyclohydrolase-2 (205 aa).

GTP is bound at residue 49 to 53; sequence RVHSE. Positions 54, 65, and 67 each coordinate Zn(2+). Residues Gln-70, 92–94, and Thr-114 contribute to the GTP site; that span reads EGR. Asp-126 serves as the catalytic Proton acceptor. Arg-128 serves as the catalytic Nucleophile. GTP is bound by residues Thr-149 and Lys-154.

This sequence belongs to the GTP cyclohydrolase II family. Requires Zn(2+) as cofactor.

The enzyme catalyses GTP + 4 H2O = 2,5-diamino-6-hydroxy-4-(5-phosphoribosylamino)-pyrimidine + formate + 2 phosphate + 3 H(+). Its pathway is cofactor biosynthesis; riboflavin biosynthesis; 5-amino-6-(D-ribitylamino)uracil from GTP: step 1/4. Catalyzes the conversion of GTP to 2,5-diamino-6-ribosylamino-4(3H)-pyrimidinone 5'-phosphate (DARP), formate and pyrophosphate. This chain is GTP cyclohydrolase-2, found in Pseudomonas fluorescens (strain SBW25).